The sequence spans 98 residues: MALTKADIAEHLFTQLGMSKREAKDMVEAFFEEIRQALERGEQVKISGFGNFDLREKNQRPGRNPKTGEDIPISARRVVTFRPGQKLKARVENVEPNE.

Residues 52 to 73 (FDLREKNQRPGRNPKTGEDIPI) are disordered.

The protein belongs to the bacterial histone-like protein family. As to quaternary structure, heterodimer of an alpha and a beta chain.

Its function is as follows. This protein is one of the two subunits of integration host factor, a specific DNA-binding protein that functions in genetic recombination as well as in transcriptional and translational control. The protein is Integration host factor subunit alpha of Aeromonas hydrophila subsp. hydrophila (strain ATCC 7966 / DSM 30187 / BCRC 13018 / CCUG 14551 / JCM 1027 / KCTC 2358 / NCIMB 9240 / NCTC 8049).